A 699-amino-acid chain; its full sequence is Elongation factor G (699 aa).

Positions 8–289 (ERYRNIGISA…AVVEYMPAPT (282 aa)) constitute a tr-type G domain. GTP is bound by residues 17–24 (AHIDAGKT), 88–92 (DTPGH), and 142–145 (NKMD).

Belongs to the TRAFAC class translation factor GTPase superfamily. Classic translation factor GTPase family. EF-G/EF-2 subfamily.

The protein resides in the cytoplasm. Its function is as follows. Catalyzes the GTP-dependent ribosomal translocation step during translation elongation. During this step, the ribosome changes from the pre-translocational (PRE) to the post-translocational (POST) state as the newly formed A-site-bound peptidyl-tRNA and P-site-bound deacylated tRNA move to the P and E sites, respectively. Catalyzes the coordinated movement of the two tRNA molecules, the mRNA and conformational changes in the ribosome. This chain is Elongation factor G, found in Variovorax paradoxus (strain S110).